The following is a 298-amino-acid chain: Probable prolyl 4-hydroxylase 4 (298 aa).

The Cytoplasmic portion of the chain corresponds to 1–6 (MARRGL). A helical; Signal-anchor for type II membrane protein membrane pass occupies residues 7-25 (LISFFAIFSVLLQSSTSLI). Topologically, residues 26–298 (SSSSVFVNPS…GYCRRSCKAC (273 aa)) are lumenal. N-linked (GlcNAc...) asparagine glycosylation is present at asparagine 77. A Fe2OG dioxygenase domain is found at 120–245 (NGEDIQVLRY…KWSATKWIHV (126 aa)). Residues histidine 138 and aspartate 140 each contribute to the Fe cation site. Asparagine 164 carries an N-linked (GlcNAc...) asparagine glycan. Residue histidine 226 coordinates Fe cation. Position 236 (lysine 236) interacts with 2-oxoglutarate. N-linked (GlcNAc...) asparagine glycosylation is found at asparagine 257 and asparagine 262. The 41-residue stretch at 258–298 (CTDMNESCERWAVLGECTKNPEYMVGTTELPGYCRRSCKAC) folds into the ShKT domain. 3 disulfides stabilise this stretch: cysteine 258–cysteine 298, cysteine 265–cysteine 291, and cysteine 274–cysteine 295.

This sequence belongs to the P4HA family. Fe(2+) serves as cofactor. It depends on L-ascorbate as a cofactor.

It localises to the endoplasmic reticulum membrane. It carries out the reaction L-prolyl-[collagen] + 2-oxoglutarate + O2 = trans-4-hydroxy-L-prolyl-[collagen] + succinate + CO2. Its function is as follows. Catalyzes the post-translational formation of 4-hydroxyproline in -Xaa-Pro-Gly- sequences in proline-rich peptide sequences of plant glycoproteins and other proteins. Hydroxyprolines are important constituent of many plant cell wall glycoproteins such as extensins, hydroxyproline-rich glycoproteins, lectins and arabinogalactan proteins. This chain is Probable prolyl 4-hydroxylase 4, found in Arabidopsis thaliana (Mouse-ear cress).